The primary structure comprises 366 residues: Protein RecA (366 aa).

81–88 serves as a coordination point for ATP; it reads GPESSGKT.

Belongs to the RecA family.

The protein localises to the cytoplasm. Its function is as follows. Can catalyze the hydrolysis of ATP in the presence of single-stranded DNA, the ATP-dependent uptake of single-stranded DNA by duplex DNA, and the ATP-dependent hybridization of homologous single-stranded DNAs. It interacts with LexA causing its activation and leading to its autocatalytic cleavage. This is Protein RecA from Leptospira interrogans serogroup Icterohaemorrhagiae serovar copenhageni (strain Fiocruz L1-130).